Reading from the N-terminus, the 882-residue chain is Valine--tRNA ligase (882 aa).

A 'HIGH' region motif is present at residues 45 to 55 (PNVTGKLHLGH). Residues 519–523 (KMSKS) carry the 'KMSKS' region motif. K522 is an ATP binding site. Positions 808-882 (LADLLNVEEE…RIAEMKKIKS (75 aa)) form a coiled coil.

Belongs to the class-I aminoacyl-tRNA synthetase family. ValS type 1 subfamily. As to quaternary structure, monomer.

It is found in the cytoplasm. The catalysed reaction is tRNA(Val) + L-valine + ATP = L-valyl-tRNA(Val) + AMP + diphosphate. Functionally, catalyzes the attachment of valine to tRNA(Val). As ValRS can inadvertently accommodate and process structurally similar amino acids such as threonine, to avoid such errors, it has a 'posttransfer' editing activity that hydrolyzes mischarged Thr-tRNA(Val) in a tRNA-dependent manner. This Streptococcus pyogenes serotype M28 (strain MGAS6180) protein is Valine--tRNA ligase.